The primary structure comprises 945 residues: Valine--tRNA ligase (945 aa).

The 'HIGH' region signature appears at 42 to 52 (PNVTGTLHMGH). Positions 552 to 556 (KMSKS) match the 'KMSKS' region motif. K555 serves as a coordination point for ATP. Residues 879-945 (DKAAETARLS…VQNQLAKLKD (67 aa)) adopt a coiled-coil conformation.

The protein belongs to the class-I aminoacyl-tRNA synthetase family. ValS type 1 subfamily. As to quaternary structure, monomer.

The protein resides in the cytoplasm. It catalyses the reaction tRNA(Val) + L-valine + ATP = L-valyl-tRNA(Val) + AMP + diphosphate. Its function is as follows. Catalyzes the attachment of valine to tRNA(Val). As ValRS can inadvertently accommodate and process structurally similar amino acids such as threonine, to avoid such errors, it has a 'posttransfer' editing activity that hydrolyzes mischarged Thr-tRNA(Val) in a tRNA-dependent manner. The chain is Valine--tRNA ligase from Neisseria meningitidis serogroup B (strain ATCC BAA-335 / MC58).